Reading from the N-terminus, the 193-residue chain is Orotate phosphoribosyltransferase (193 aa).

A 5-phospho-alpha-D-ribose 1-diphosphate-binding site is contributed by glutamate 114 to serine 122. Orotate is bound by residues threonine 118 and arginine 146.

Belongs to the purine/pyrimidine phosphoribosyltransferase family. PyrE subfamily. In terms of assembly, homodimer. Requires Mg(2+) as cofactor.

It carries out the reaction orotidine 5'-phosphate + diphosphate = orotate + 5-phospho-alpha-D-ribose 1-diphosphate. It functions in the pathway pyrimidine metabolism; UMP biosynthesis via de novo pathway; UMP from orotate: step 1/2. Functionally, catalyzes the transfer of a ribosyl phosphate group from 5-phosphoribose 1-diphosphate to orotate, leading to the formation of orotidine monophosphate (OMP). This is Orotate phosphoribosyltransferase from Chlorobaculum parvum (strain DSM 263 / NCIMB 8327) (Chlorobium vibrioforme subsp. thiosulfatophilum).